Here is a 663-residue protein sequence, read N- to C-terminus: Translation factor GUF1 homolog, mitochondrial (663 aa).

A tr-type G domain is found at 64–250 (EKIRNFSIIA…AVIERIPPPP (187 aa)). GTP is bound by residues 73–80 (AHIDHGKS), 143–147 (DTPGH), and 197–200 (NKID).

The protein belongs to the TRAFAC class translation factor GTPase superfamily. Classic translation factor GTPase family. LepA subfamily.

It is found in the mitochondrion inner membrane. The enzyme catalyses GTP + H2O = GDP + phosphate + H(+). In terms of biological role, promotes mitochondrial protein synthesis. May act as a fidelity factor of the translation reaction, by catalyzing a one-codon backward translocation of tRNAs on improperly translocated ribosomes. Binds to mitochondrial ribosomes in a GTP-dependent manner. In Arabidopsis thaliana (Mouse-ear cress), this protein is Translation factor GUF1 homolog, mitochondrial.